The sequence spans 288 residues: Polyamine aminopropyltransferase (288 aa).

The PABS domain occupies 9–238; that stretch reads ETLHDQFGQY…GIMTFAWATD (230 aa). Q33 serves as a coordination point for S-methyl-5'-thioadenosine. Positions 64 and 88 each coordinate spermidine. S-methyl-5'-thioadenosine contacts are provided by residues E108 and 140–141; that span reads DG. The active-site Proton acceptor is D158. 158-161 contributes to the spermidine binding site; the sequence is DCTD. Position 165 (P165) interacts with S-methyl-5'-thioadenosine.

This sequence belongs to the spermidine/spermine synthase family. In terms of assembly, homodimer or homotetramer.

The protein resides in the cytoplasm. It carries out the reaction S-adenosyl 3-(methylsulfanyl)propylamine + putrescine = S-methyl-5'-thioadenosine + spermidine + H(+). The protein operates within amine and polyamine biosynthesis; spermidine biosynthesis; spermidine from putrescine: step 1/1. Functionally, catalyzes the irreversible transfer of a propylamine group from the amino donor S-adenosylmethioninamine (decarboxy-AdoMet) to putrescine (1,4-diaminobutane) to yield spermidine. The polypeptide is Polyamine aminopropyltransferase (Escherichia coli O17:K52:H18 (strain UMN026 / ExPEC)).